Consider the following 308-residue polypeptide: Cell division protein FtsX (308 aa).

Over 1-24 the chain is Extracellular; it reads MISRFFRHLFEALKSLKRNGWMTV. A helical membrane pass occupies residues 25–45; it reads AAVSSVMITLTLVAIFASVIF. At 46 to 178 the chain is on the cytoplasmic side; that stretch reads NTAKLATDIE…NTERLFKLAS (133 aa). The chain crosses the membrane as a helical span at residues 179–199; that stretch reads FIRVWGLGIAALLIFIAAFLI. Over 200–236 the chain is Extracellular; it reads SNTIRITIISRSREIQIMRLVGAKNSYIRGPFLLEGA. The helical transmembrane segment at 237–257 threads the bilayer; that stretch reads FIGLLGAIAPSVLVFIVYQIV. The Cytoplasmic portion of the chain corresponds to 258 to 276; the sequence is YQSVNKSLVGQNLSMISPD. Residues 277–297 form a helical membrane-spanning segment; the sequence is LFSPLMIALLFVIGVFIGSLG. Topologically, residues 298-308 are extracellular; it reads SGISMRRFLKI.

This sequence belongs to the ABC-4 integral membrane protein family. FtsX subfamily. In terms of assembly, interacts with FtsE. Interacts (via large extracellular loop) with PcsB (via N-terminal coiled coil domain). This interaction directs PcsB to equatorial and septal sites of dividing cells.

It localises to the cell membrane. Part of the ABC transporter FtsEX involved in asymmetric cellular division facilitating the initiation of sporulation. Required in maintaining normal growth and cellular morphology. The sequence is that of Cell division protein FtsX from Streptococcus pneumoniae (strain ATCC BAA-255 / R6).